The primary structure comprises 435 residues: ATP-dependent protease ATPase subunit HslU (435 aa).

ATP is bound by residues Ile-18, 60–65, Asp-248, Glu-313, and Arg-385; that span reads GVGKTE.

This sequence belongs to the ClpX chaperone family. HslU subfamily. In terms of assembly, a double ring-shaped homohexamer of HslV is capped on each side by a ring-shaped HslU homohexamer. The assembly of the HslU/HslV complex is dependent on binding of ATP.

The protein localises to the cytoplasm. Its function is as follows. ATPase subunit of a proteasome-like degradation complex; this subunit has chaperone activity. The binding of ATP and its subsequent hydrolysis by HslU are essential for unfolding of protein substrates subsequently hydrolyzed by HslV. HslU recognizes the N-terminal part of its protein substrates and unfolds these before they are guided to HslV for hydrolysis. The polypeptide is ATP-dependent protease ATPase subunit HslU (Rhizobium johnstonii (strain DSM 114642 / LMG 32736 / 3841) (Rhizobium leguminosarum bv. viciae)).